We begin with the raw amino-acid sequence, 277 residues long: NADPH-dependent 7-cyano-7-deazaguanine reductase (277 aa).

83 to 85 is a binding site for substrate; it reads VES. NADPH is bound at residue 85–86; sequence SK. Cys184 acts as the Thioimide intermediate in catalysis. Catalysis depends on Asp191, which acts as the Proton donor. 223 to 224 provides a ligand contact to substrate; sequence HE. Residue 252–253 participates in NADPH binding; that stretch reads RG.

Belongs to the GTP cyclohydrolase I family. QueF type 2 subfamily. Homodimer.

The protein localises to the cytoplasm. The catalysed reaction is 7-aminomethyl-7-carbaguanine + 2 NADP(+) = 7-cyano-7-deazaguanine + 2 NADPH + 3 H(+). Its pathway is tRNA modification; tRNA-queuosine biosynthesis. Functionally, catalyzes the NADPH-dependent reduction of 7-cyano-7-deazaguanine (preQ0) to 7-aminomethyl-7-deazaguanine (preQ1). This Cupriavidus taiwanensis (strain DSM 17343 / BCRC 17206 / CCUG 44338 / CIP 107171 / LMG 19424 / R1) (Ralstonia taiwanensis (strain LMG 19424)) protein is NADPH-dependent 7-cyano-7-deazaguanine reductase.